The chain runs to 581 residues: Serine/threonine-protein kinase PINK1, mitochondrial (581 aa).

Residues 1–77 (MAVRQALGRG…RFFRQSVAGL (77 aa)) constitute a mitochondrion transit peptide. The Mitochondrial intermembrane portion of the chain corresponds to 78–93 (AARLQRQFVVRAWGCA). Residues 94–110 (GPCGRAVFLAFGLGLGL) traverse the membrane as a helical segment. A required for outer membrane localization region spans residues 111-117 (IEEKQAE). Residues 111–581 (IEEKQAESRR…LLLCSWRAAL (471 aa)) lie on the Cytoplasmic side of the membrane. The Protein kinase domain occupies 156-511 (YLIGQSIGKG…VAANVLHLSL (356 aa)). Residues 162–170 (IGKGCSAAV) and K186 each bind ATP. The segment at 189-208 (GLLPGRGPGTSAPGEGQERA) is disordered. S228 carries the post-translational modification Phosphoserine; by autocatalysis. D362 acts as the Proton acceptor in catalysis. S402 bears the Phosphoserine; by autocatalysis mark.

The protein belongs to the protein kinase superfamily. Ser/Thr protein kinase family. Upon mitochondrial depolarization, it forms a supercomplex with TOM and TIM23 complexes. PINK1-TOM-TIM23 supercomplex formation requires PINK1 interaction with TOMM20 and TOMM70 and is critical for PINK1 stabilization at the outer mitochondrial membrane, kinase activation and downstream mitophagy. Upon mitochondrial depolarization, interacts with TIMM23; the interaction is required for PINK1 accumulation at the outer mitochondrial membrane, kinase activation by autophosphorylation and PRKN recruitement to mitochondria. Interacts with PRKN. Interacts with FBXO7. Forms a complex with PRKN and PARK7. Interacts with NENF. It depends on Mg(2+) as a cofactor. Proteolytically cleaved. In healthy cells, the precursor is continuously imported into the inner mitochondrial membrane (IMM), where it is proteolytically cleaved by mitochondrial-processing peptidase (MPP) and then undergoes further proteolytic cleavage by PARL or AFG3L2 to give rise to the 52 kDa short form. The 52 kDa short form is then released into the cytosol where it rapidly undergoes proteasome-dependent degradation. In unhealthy cells, when cellular stress conditions lead to the loss of mitochondrial membrane potential, mitochondrial import is impaired leading to the precursor accumulating on the outer mitochondrial membrane (OMM). If accumulation at the OMM fails and it is imported into the depolarized mitochondria, it undergoes cleavage by the IMM protease OMA1, promoting its subsequent degradation by the proteasome. Post-translationally, autophosphorylated. Loss of mitochondrial membrane potential results in the precursor accumulating on the outer mitochondrial membrane (OMM) where it is activated by autophosphorylation. Autophosphorylation at Ser-228 and Ser-402 is sufficient and essential for selective recruitment of PRKN to depolarized mitochondria, via PINK1-dependent phosphorylation of ubiquitin and maybe PRKN. Highly expressed in heart, skeletal muscle and testis, and at lower levels in brain, placenta, liver, kidney, pancreas, prostate, ovary and small intestine. Present in the embryonic testis from an early stage of development.

The protein localises to the mitochondrion outer membrane. The protein resides in the mitochondrion inner membrane. It localises to the cytoplasm. It is found in the cytosol. It carries out the reaction L-seryl-[protein] + ATP = O-phospho-L-seryl-[protein] + ADP + H(+). The enzyme catalyses L-threonyl-[protein] + ATP = O-phospho-L-threonyl-[protein] + ADP + H(+). Functionally, serine/threonine-protein kinase which acts as a sensor of mitochondrial damage and protects against mitochondrial dysfunction during cellular stress. It phosphorylates mitochondrial proteins to coordinate mitochondrial quality control mechanisms that remove and replace dysfunctional mitochondrial components. Depending on the severity of mitochondrial damage, activity ranges from preventing apoptosis and stimulating mitochondrial biogenesis to eliminating severely damaged mitochondria via PINK1-PRKN-dependent mitophagy. When cellular stress results in irreversible mitochondrial damage, PINK1 accumulates at the outer mitochondrial membrane (OMM) where it phosphorylates pre-existing polyubiquitin chains at 'Ser-65', recruits PRKN from the cytosol to the OMM and activates PRKN by phosphorylation at 'Ser-65'; activated PRKN then ubiquinates VDAC1 and other OMM proteins to initiate mitophagy. The PINK1-PRKN pathway also promotes fission of damaged mitochondria through phosphorylation and PRKN-dependent degradation of mitochondrial proteins involved in fission such as MFN2. This prevents the refusion of unhealthy mitochondria with the mitochondrial network or initiates mitochondrial fragmentation facilitating their later engulfment by autophagosomes. Also promotes mitochondrial fission independently of PRKN and ATG7-mediated mitophagy, via the phosphorylation and activation of DNM1L. Regulates motility of damaged mitochondria by promoting the ubiquitination and subsequent degradation of MIRO1 and MIRO2; in motor neurons, this likely inhibits mitochondrial intracellular anterograde transport along the axons which probably increases the chance of the mitochondria undergoing mitophagy in the soma. Required for ubiquinone reduction by mitochondrial complex I by mediating phosphorylation of complex I subunit NDUFA10. Phosphorylates LETM1, positively regulating its mitochondrial calcium transport activity. The polypeptide is Serine/threonine-protein kinase PINK1, mitochondrial (PINK1) (Homo sapiens (Human)).